A 411-amino-acid polypeptide reads, in one-letter code: Putative acid phosphatase 10 (411 aa).

H33 acts as the Nucleophile in catalysis. D313 functions as the Proton donor in the catalytic mechanism. C379 and C385 are oxidised to a cystine.

It belongs to the histidine acid phosphatase family.

The catalysed reaction is a phosphate monoester + H2O = an alcohol + phosphate. The protein is Putative acid phosphatase 10 (pho-10) of Caenorhabditis elegans.